The following is a 164-amino-acid chain: Nitric oxide synthase, inducible (164 aa).

Phe3 serves as a coordination point for (6R)-L-erythro-5,6,7,8-tetrahydrobiopterin. Tyr18 contacts heme b. The interval 42–62 (FKGLIRAVLFSQTLIKSALAK) is calmodulin-binding. The 99-residue stretch at 66-164 (CTVLYATETG…SRMYPHFCAF (99 aa)) folds into the Flavodoxin-like domain. FMN-binding residues include Thr72, Glu73, Thr74, Lys76, Ser77, Ser118, Thr119, Ser155, and Cys162.

Belongs to the NOS family. In terms of assembly, homodimer. Heme b serves as cofactor. FAD is required as a cofactor. The cofactor is FMN. It depends on (6R)-L-erythro-5,6,7,8-tetrahydrobiopterin as a cofactor.

Its subcellular location is the cytoplasm. The protein localises to the cytosol. It catalyses the reaction 2 L-arginine + 3 NADPH + 4 O2 + H(+) = 2 L-citrulline + 2 nitric oxide + 3 NADP(+) + 4 H2O. Its activity is regulated as follows. Not stimulated by calcium/calmodulin. Functionally, produces nitric oxide (NO) which is a messenger molecule with diverse functions throughout the body. In macrophages, NO mediates tumoricidal and bactericidal actions. Also has nitrosylase activity and mediates cysteine S-nitrosylation of cytoplasmic target proteins such COX2. This chain is Nitric oxide synthase, inducible (nos2), found in Carassius auratus (Goldfish).